Reading from the N-terminus, the 105-residue chain is Met repressor (105 aa).

Belongs to the MetJ family. Homodimer.

It localises to the cytoplasm. In terms of biological role, this regulatory protein, when combined with SAM (S-adenosylmethionine) represses the expression of the methionine regulon and of enzymes involved in SAM synthesis. The protein is Met repressor of Photorhabdus laumondii subsp. laumondii (strain DSM 15139 / CIP 105565 / TT01) (Photorhabdus luminescens subsp. laumondii).